Consider the following 186-residue polypeptide: Peptidyl-tRNA hydrolase (186 aa).

Tyr-14 is a binding site for tRNA. His-19 serves as the catalytic Proton acceptor. Residues Tyr-64, Asn-66, and Asn-113 each coordinate tRNA.

This sequence belongs to the PTH family. In terms of assembly, monomer.

Its subcellular location is the cytoplasm. It carries out the reaction an N-acyl-L-alpha-aminoacyl-tRNA + H2O = an N-acyl-L-amino acid + a tRNA + H(+). Its function is as follows. Hydrolyzes ribosome-free peptidyl-tRNAs (with 1 or more amino acids incorporated), which drop off the ribosome during protein synthesis, or as a result of ribosome stalling. Catalyzes the release of premature peptidyl moieties from peptidyl-tRNA molecules trapped in stalled 50S ribosomal subunits, and thus maintains levels of free tRNAs and 50S ribosomes. The chain is Peptidyl-tRNA hydrolase from Agathobacter rectalis (strain ATCC 33656 / DSM 3377 / JCM 17463 / KCTC 5835 / VPI 0990) (Eubacterium rectale).